The sequence spans 155 residues: Polyadenylate-binding protein-interacting protein 5 (155 aa).

Positions 7-17 (ALNPHAASYVP) match the PAM2-like motif. The region spanning 66–109 (DIDMDIEYLLVTFSGLSQESITDVYLANGGDLEATIEMLNQLEI) is the CUE domain. The segment at 114–155 (SEENLPETLDIGDISESGPSTSKSTEVAASTSSVIPNAPVSA) is disordered. A compositionally biased stretch (polar residues) spans 130–148 (SGPSTSKSTEVAASTSSVI).

Specifically expressed in immature siliques.

Functionally, promotes polyploidy in dark-grown seedlings. Regulates the endocycle leading to hypocotyl elongation. This Arabidopsis thaliana (Mouse-ear cress) protein is Polyadenylate-binding protein-interacting protein 5 (CID5).